The chain runs to 305 residues: Ribosomal RNA small subunit methyltransferase H (305 aa).

S-adenosyl-L-methionine is bound by residues 30-32, Asp49, Phe74, Asp96, and Gln103; that span reads GGH.

The protein belongs to the methyltransferase superfamily. RsmH family.

It is found in the cytoplasm. The catalysed reaction is cytidine(1402) in 16S rRNA + S-adenosyl-L-methionine = N(4)-methylcytidine(1402) in 16S rRNA + S-adenosyl-L-homocysteine + H(+). Its function is as follows. Specifically methylates the N4 position of cytidine in position 1402 (C1402) of 16S rRNA. The chain is Ribosomal RNA small subunit methyltransferase H from Francisella tularensis subsp. novicida (strain U112).